Consider the following 325-residue polypeptide: Proto-oncogene Mas (325 aa).

Topologically, residues 1–36 (MDGSNVTSFVVEEPTNISTGRNASVGNAHRQIPIVH) are extracellular. N-linked (GlcNAc...) asparagine glycans are attached at residues Asn-5, Asn-16, and Asn-22. Residues 37 to 61 (WVIMSISPVGFVENGILLWFLCFRM) form a helical membrane-spanning segment. Topologically, residues 62 to 65 (RRNP) are cytoplasmic. A helical membrane pass occupies residues 66 to 86 (FTVYITHLSIADISLLFCIFI). Residues 87–104 (LSIDYALDYELSSGHYYT) are Extracellular-facing. Residues 105 to 128 (IVTLSVTFLFGYNTGLYLLTAISV) traverse the membrane as a helical segment. At 129 to 149 (ERCLSVLYPIWYRCHRPKYQS) the chain is on the cytoplasmic side. The chain crosses the membrane as a helical span at residues 150–172 (ALVCALLWALSCLVTTMEYVMCI). The Extracellular segment spans residues 173-185 (DREEESHSRNDCR). The chain crosses the membrane as a helical span at residues 186–206 (AVIIFIAILSFLVFTPLMLVS). Residues 207 to 224 (STILVVKIRKNTWASHSS) lie on the Cytoplasmic side of the membrane. Residues 225–245 (KLYIVIMVTIIIFLIFAMPMR) traverse the membrane as a helical segment. The Extracellular segment spans residues 246–263 (LLYLLYYEYWSTFGNLHH). A helical transmembrane segment spans residues 264 to 284 (ISLLFSTINSSANPFIYFFVG). Residues 285–325 (SSKKKRFKESLKVVLTRAFKDEMQPRRQKDNCNTVTVETVV) lie on the Cytoplasmic side of the membrane.

It belongs to the G-protein coupled receptor 1 family. Interacts with AGTR1. Interacts with FLNA (via filamin repeat 21); increases PKA-mediated phosphorylation of FLNA.

The protein localises to the cell membrane. Receptor for angiotensin 1-7. Acts specifically as a functional antagonist of AGTR1 (angiotensin-2 type 1 receptor), although it up-regulates AGTR1 receptor levels. Positive regulation of AGTR1 levels occurs through activation of the G-proteins GNA11 and GNAQ, and stimulation of the protein kinase C signaling cascade. The antagonist effect on AGTR1 function is probably due to AGTR1 being physically altered by MAS1. The chain is Proto-oncogene Mas (MAS1) from Homo sapiens (Human).